We begin with the raw amino-acid sequence, 334 residues long: MIEADRLVSAGVISEEEVIDRAIRPKMLAEYVGQPVVREQMEIFIKAAMMRGDALDHLLIFGPPGLGKTTLANIVANEMGVNLRTTSGPVLEKAGDLAALLTNLEPHDVLFIDEIHRLSPVVEEVLYPAMEDYQLDIMIGEGPAARSIKLDLPPFTLIGATTRAGSLTSPLRDRFGIVQRLEFYRVEDLQHIVGRSAACLGLPLSDEGALEIARRARGTPRIANRLLRRVRDFAEVRAGGEMSGDVASRALDMLSVDSEGFDYMDRKLLLAIIDKFTGGPVGLDNLAAAIGEERETIEDVLEPYLIQQGFIQRTPRGRMATQHAYKHFGITREG.

Residues 4-184 form a large ATPase domain (RuvB-L) region; it reads ADRLVSAGVI…FGIVQRLEFY (181 aa). ATP contacts are provided by residues I23, R24, G65, K68, T69, T70, 131-133, R174, Y184, and R221; that span reads EDY. T69 lines the Mg(2+) pocket. The small ATPAse domain (RuvB-S) stretch occupies residues 185 to 255; that stretch reads RVEDLQHIVG…VASRALDMLS (71 aa). A head domain (RuvB-H) region spans residues 258-334; that stretch reads SEGFDYMDRK…YKHFGITREG (77 aa). DNA contacts are provided by R294, R313, and R318.

It belongs to the RuvB family. Homohexamer. Forms an RuvA(8)-RuvB(12)-Holliday junction (HJ) complex. HJ DNA is sandwiched between 2 RuvA tetramers; dsDNA enters through RuvA and exits via RuvB. An RuvB hexamer assembles on each DNA strand where it exits the tetramer. Each RuvB hexamer is contacted by two RuvA subunits (via domain III) on 2 adjacent RuvB subunits; this complex drives branch migration. In the full resolvosome a probable DNA-RuvA(4)-RuvB(12)-RuvC(2) complex forms which resolves the HJ.

The protein resides in the cytoplasm. The catalysed reaction is ATP + H2O = ADP + phosphate + H(+). In terms of biological role, the RuvA-RuvB-RuvC complex processes Holliday junction (HJ) DNA during genetic recombination and DNA repair, while the RuvA-RuvB complex plays an important role in the rescue of blocked DNA replication forks via replication fork reversal (RFR). RuvA specifically binds to HJ cruciform DNA, conferring on it an open structure. The RuvB hexamer acts as an ATP-dependent pump, pulling dsDNA into and through the RuvAB complex. RuvB forms 2 homohexamers on either side of HJ DNA bound by 1 or 2 RuvA tetramers; 4 subunits per hexamer contact DNA at a time. Coordinated motions by a converter formed by DNA-disengaged RuvB subunits stimulates ATP hydrolysis and nucleotide exchange. Immobilization of the converter enables RuvB to convert the ATP-contained energy into a lever motion, pulling 2 nucleotides of DNA out of the RuvA tetramer per ATP hydrolyzed, thus driving DNA branch migration. The RuvB motors rotate together with the DNA substrate, which together with the progressing nucleotide cycle form the mechanistic basis for DNA recombination by continuous HJ branch migration. Branch migration allows RuvC to scan DNA until it finds its consensus sequence, where it cleaves and resolves cruciform DNA. This is Holliday junction branch migration complex subunit RuvB from Erwinia tasmaniensis (strain DSM 17950 / CFBP 7177 / CIP 109463 / NCPPB 4357 / Et1/99).